The sequence spans 141 residues: Vesicle-associated membrane protein 4 (141 aa).

Residues 1–51 are disordered; it reads MPPKFKRHLNDDDVTGSVKSERRNLLEDDSDEEEDFFLRGPSGPRFGPRND. At 1-115 the chain is on the cytoplasmic side; the sequence is MPPKFKRHLN…RRQMWWRGCK (115 aa). A phosphoserine mark is found at Ser17 and Ser30. In terms of domain architecture, v-SNARE coiled-coil homology spans 52–112; sequence KIKHVQNQVD…KQLRRQMWWR (61 aa). Residues 116-136 form a helical; Anchor for type IV membrane protein membrane-spanning segment; the sequence is IKAIMALVAAILLLVIIILIV. Residues 137-141 are Vesicular-facing; that stretch reads MKYRT.

Belongs to the synaptobrevin family. Identified in a complex containing STX6, STX12, VAMP4 and VTI1A. Interacts with BAIAP3; this interaction is increased in the presence of calcium.

The protein resides in the golgi apparatus. It is found in the trans-Golgi network membrane. Involved in the pathway that functions to remove an inhibitor (probably synaptotagmin-4) of calcium-triggered exocytosis during the maturation of secretory granules. May be a marker for this sorting pathway that is critical for remodeling the secretory response of granule. In Homo sapiens (Human), this protein is Vesicle-associated membrane protein 4 (VAMP4).